The primary structure comprises 433 residues: MAQFYSAKRRTTTRQIITVSVNDLDSFGQGVARHNGKTLFIPGLLPQENAEVTVTEDKKQYARAKVVRRLSDSPGRETPRCPHFGVCGGCQQQHASVDLQQRSKSAALARLMKHEVSEVIADVPWGYRRRARLSLNYLPKTQQLQMGFRKAGSSDIVDVKQCPILVPQLEALLPKVMACLGSLQVMRHLGHVELVQATSGTLMILRHTAPLSSADREKLERFSHSEGLDLYLAPDSEILETVSGEMPWYDSNGLRLTFSPRDFIQVNAGVNQKMVARALEWLDVQPEDRVLDLFCGMGNFTLPLATQAASVVGVEGVPALVEKGQQNARLNGLQNVTFYHENLEEDVTKQPWAKNGFDKVLLDPARAGAAGVMQQIIKLEPIRIVYVSCNPATLARDSEALLKAGYTIARLAMLDMFPHTGHLESMVLFSRVK.

One can recognise a TRAM domain in the interval 10–68 (RTTTRQIITVSVNDLDSFGQGVARHNGKTLFIPGLLPQENAEVTVTEDKKQYARAKVVR). Positions 81, 87, 90, and 162 each coordinate [4Fe-4S] cluster. 6 residues coordinate S-adenosyl-L-methionine: glutamine 265, phenylalanine 294, asparagine 299, glutamate 315, asparagine 342, and aspartate 363. Catalysis depends on cysteine 389, which acts as the Nucleophile.

Belongs to the class I-like SAM-binding methyltransferase superfamily. RNA M5U methyltransferase family. RlmD subfamily.

It catalyses the reaction uridine(1939) in 23S rRNA + S-adenosyl-L-methionine = 5-methyluridine(1939) in 23S rRNA + S-adenosyl-L-homocysteine + H(+). Catalyzes the formation of 5-methyl-uridine at position 1939 (m5U1939) in 23S rRNA. In Shigella sonnei (strain Ss046), this protein is 23S rRNA (uracil(1939)-C(5))-methyltransferase RlmD.